The primary structure comprises 499 residues: U4/U6 small nuclear ribonucleoprotein Prp31 (499 aa).

The disordered stretch occupies residues 1–43 (MSLADELLADLEEAAEEEEGGSYGEEEEEPAIEDVQEETQLDL). Residues 7 to 40 (LLADLEEAAEEEEGGSYGEEEEEPAIEDVQEETQ) show a composition bias toward acidic residues. 2 coiled-coil regions span residues 85–120 (EAAPEYRVIVDANNLTVEIENELNIIHKFIRDKYSK) and 181–215 (DEELERLEEACDMALELNASKHRIYEYVESRMSFI). Residues 215 to 333 (IAPNLSIIIG…IERKFDKWQE (119 aa)) enclose the Nop domain. The interval 334 to 357 (PPPVKQVKPLPAPLDGQRKKRGGR) is disordered. Residues 351–364 (RKKRGGRRYRKMKE) carry the Nuclear localization signal (NLS) motif. Phosphoserine occurs at positions 379, 395, and 432. Residue K438 is modified to N6-acetyllysine. S439 carries the post-translational modification Phosphoserine. Position 440 is a phosphothreonine (T440). S450 is modified (phosphoserine). The residue at position 455 (T455) is a Phosphothreonine. Residues K471 and K478 each participate in a glycyl lysine isopeptide (Lys-Gly) (interchain with G-Cter in SUMO2) cross-link.

Belongs to the PRP31 family. In terms of assembly, identified in the spliceosome B complex. Component of the U4/U6-U5 tri-snRNP complex composed of the U4, U6 and U5 snRNAs and at least PRPF3, PRPF4, PRPF6, PRPF8, PRPF31, SNRNP200, TXNL4A, SNRNP40, DDX23, CD2BP2, PPIH, SNU13, EFTUD2, SART1 and USP39. Interacts with a complex formed by SNU13 and U4 snRNA, but not with SNU13 or U4 snRNA alone. The complex formed by SNU13 and PRPF31 also binds U4atac snRNA, a characteristic component of specific, less abundant spliceosomal complexes. Interacts with PRPF6/U5 snRNP-associated 102 kDa protein. Component of some MLL1/MLL complex, at least composed of the core components KMT2A/MLL1, ASH2L, HCFC1/HCF1, WDR5 and RBBP5, as well as the facultative components BACC1, CHD8, E2F6, HSP70, INO80C, KANSL1, LAS1L, MAX, MCRS1, MGA, KAT8/MOF, PELP1, PHF20, PRP31, RING2, RUVB1/TIP49A, RUVB2/TIP49B, SENP3, TAF1, TAF4, TAF6, TAF7, TAF9 and TEX10. Interacts (via its NLS) with CTNNBL1. Interacts with USH1G. Phosphorylated by PRP4K during spliceosome assembly.

It is found in the nucleus. The protein localises to the nucleus speckle. It localises to the cajal body. In terms of biological role, involved in pre-mRNA splicing as component of the spliceosome. Required for the assembly of the U4/U5/U6 tri-snRNP complex, one of the building blocks of the spliceosome. This Mus musculus (Mouse) protein is U4/U6 small nuclear ribonucleoprotein Prp31 (Prpf31).